The primary structure comprises 621 residues: Acetolactate synthase (621 aa).

Residues 1 to 19 (MSAPTRRPAPDAPGAAGIA) show a composition bias toward low complexity. The segment at 1–39 (MSAPTRRPAPDAPGAAGIAPAPPAPAAKPAAGKPKRIGP) is disordered. Glu89 contacts thiamine diphosphate. Residues Arg190, 296–317 (HGTVAAVAALQRSDLLIALGTR), and 339–358 (DIDPAEIGKNRHADVPIVGD) each bind FAD. Residues 432 to 512 (HDQMWAAQFI…IKVALINNGN (81 aa)) form a thiamine pyrophosphate binding region. Mg(2+) contacts are provided by Asp483 and Asn510.

The protein belongs to the TPP enzyme family. Mg(2+) is required as a cofactor. Requires thiamine diphosphate as cofactor.

The enzyme catalyses 2 pyruvate + H(+) = (2S)-2-acetolactate + CO2. Its pathway is amino-acid biosynthesis; L-isoleucine biosynthesis; L-isoleucine from 2-oxobutanoate: step 1/4. It participates in amino-acid biosynthesis; L-valine biosynthesis; L-valine from pyruvate: step 1/4. The sequence is that of Acetolactate synthase (ilvB) from Mycobacterium avium.